Consider the following 125-residue polypeptide: Glycine cleavage system H protein (125 aa).

The region spanning 23 to 103 is the Lipoyl-binding domain; the sequence is TALVGITDFA…PYNAWLIKMK (81 aa). Position 64 is an N6-lipoyllysine (Lys64).

This sequence belongs to the GcvH family. The glycine cleavage system is composed of four proteins: P, T, L and H. (R)-lipoate is required as a cofactor.

The glycine cleavage system catalyzes the degradation of glycine. The H protein shuttles the methylamine group of glycine from the P protein to the T protein. The polypeptide is Glycine cleavage system H protein (Chlorobium chlorochromatii (strain CaD3)).